Consider the following 340-residue polypeptide: Dihydroorotate dehydrogenase (quinone) (340 aa).

Residues 65-69 (AGADK) and Thr-89 contribute to the FMN site. Lys-69 contacts substrate. 114-118 (NRNGF) is a binding site for substrate. Positions 142 and 175 each coordinate FMN. Residue Asn-175 coordinates substrate. Ser-178 functions as the Nucleophile in the catalytic mechanism. Asn-180 is a binding site for substrate. Residues Lys-220 and Thr-248 each contribute to the FMN site. 249–250 (NT) lines the substrate pocket. FMN contacts are provided by residues Gly-271, Gly-300, and 321–322 (YS).

It belongs to the dihydroorotate dehydrogenase family. Type 2 subfamily. As to quaternary structure, monomer. Requires FMN as cofactor.

The protein resides in the cell membrane. It carries out the reaction (S)-dihydroorotate + a quinone = orotate + a quinol. It participates in pyrimidine metabolism; UMP biosynthesis via de novo pathway; orotate from (S)-dihydroorotate (quinone route): step 1/1. Its function is as follows. Catalyzes the conversion of dihydroorotate to orotate with quinone as electron acceptor. The polypeptide is Dihydroorotate dehydrogenase (quinone) (Actinobacillus succinogenes (strain ATCC 55618 / DSM 22257 / CCUG 43843 / 130Z)).